The following is a 422-amino-acid chain: Adenylosuccinate synthetase (422 aa).

GTP-binding positions include 11–17 (GDEGKGK) and 39–41 (GHT). Asp-12 functions as the Proton acceptor in the catalytic mechanism. Residues Asp-12 and Gly-39 each contribute to the Mg(2+) site. IMP-binding positions include 12–15 (DEGK), 37–40 (NAGH), Thr-129, Arg-143, Asn-219, Thr-234, and Arg-298. His-40 functions as the Proton donor in the catalytic mechanism. 294-300 (VTTGRRR) serves as a coordination point for substrate. Residues Arg-300, 326 to 328 (KLD), and 409 to 411 (GTG) contribute to the GTP site.

The protein belongs to the adenylosuccinate synthetase family. In terms of assembly, homodimer. The cofactor is Mg(2+).

The protein resides in the cytoplasm. The catalysed reaction is IMP + L-aspartate + GTP = N(6)-(1,2-dicarboxyethyl)-AMP + GDP + phosphate + 2 H(+). It functions in the pathway purine metabolism; AMP biosynthesis via de novo pathway; AMP from IMP: step 1/2. Its function is as follows. Plays an important role in the de novo pathway and in the salvage pathway of purine nucleotide biosynthesis. Catalyzes the first committed step in the biosynthesis of AMP from IMP. This is Adenylosuccinate synthetase from Ajellomyces capsulatus (strain NAm1 / WU24) (Darling's disease fungus).